We begin with the raw amino-acid sequence, 1349 residues long: Patatin-like phospholipase domain-containing protein 7 (1349 aa).

Over M1–L36 the chain is Lumenal. A helical transmembrane segment spans residues M37 to V57. At Y58–S1349 the chain is on the cytoplasmic side. Position 170–297 (V170–R297) interacts with a nucleoside 3',5'-cyclic phosphate. Residues M340–D361 are disordered. Phosphoserine is present on residues S341 and S377. A nucleoside 3',5'-cyclic phosphate contacts are provided by residues F496 to R599 and A610 to K715. Residues V678 to R964 form an involved in the binding to lipid droplets region. Positions L947–R1113 constitute a PNPLA domain. The short motif at G951 to G956 is the GXGXXG element. The GXSXG signature appears at G978 to G982. Residue S980 is the Nucleophile of the active site. D1100 functions as the Proton acceptor in the catalytic mechanism. The short motif at D1100–G1102 is the DGA/G element. S1277 bears the Phosphoserine mark. Phosphothreonine is present on T1281. The segment at D1297 to S1349 is disordered. Positions S1314–S1331 are enriched in polar residues.

Belongs to the NTE family. Expressed in the brain, liver, kidney, lung and testis.

The protein localises to the endoplasmic reticulum membrane. It is found in the lipid droplet. The catalysed reaction is a 1-acyl-sn-glycero-3-phosphocholine + H2O = sn-glycerol 3-phosphocholine + a fatty acid + H(+). It catalyses the reaction 1-(9Z-octadecenoyl)-sn-glycero-3-phosphocholine + H2O = sn-glycerol 3-phosphocholine + (9Z)-octadecenoate + H(+). The enzyme catalyses 1-(9Z-octadecenoyl)-sn-glycero-3-phosphoethanolamine + H2O = sn-glycero-3-phosphoethanolamine + (9Z)-octadecenoate + H(+). It carries out the reaction 1-(9Z-octadecenoyl)-sn-glycero-3-phospho-L-serine + H2O = sn-glycero-3-phospho-L-serine + (9Z)-octadecenoate + H(+). The catalysed reaction is 1-hexadecanoyl-sn-glycero-3-phosphocholine + H2O = sn-glycerol 3-phosphocholine + hexadecanoate + H(+). It catalyses the reaction 1-hexadecanoyl-sn-glycero-3-phosphate + H2O = sn-glycerol 3-phosphate + hexadecanoate + H(+). Functionally, lysophospholipase which preferentially deacylates unsaturated lysophosphatidylcholine (C18:1), generating glycerophosphocholine. Also can deacylate, to a lesser extent, lysophosphatidylethanolamine (C18:1), lysophosphatidyl-L-serine (C18:1) and lysophosphatidic acid (C16:0). This is Patatin-like phospholipase domain-containing protein 7 (Pnpla7) from Rattus norvegicus (Rat).